The sequence spans 531 residues: MSSSTLEGQETASHHSKNSPSRHGDDGGLQTAGDEYVYIADHYGMVRRMIFIMTVCSSMFTNQLGLCNSLSTLEEIGESFGVTDPGKLSWTISGYGLTLGTFILIGGRLGDEFGNKAIFVIGMGWLALTSMMAGVSVYAGYPVYILARVLQGLGPALTVPNALAIMGKCFSEHPRNMGFAWFAASAPVGAMAGLLFGPLFTMAWWPWIYWSQALGVAFVFALSIVAIPNMPAESEQKQRRTILEILERIDLLGGACGVTALVLFNFAWNQSLVATWKEPYVYVCLILSFLFLAAFFYVELRVARHPILPVAVLTSDIAFVFGCTAAGWSTFGIWLFYVIRICLNIGGQTPIQMAAWLSPILVTGIGTALIVGKIITKVPASSIMLFAMLCYFITSLLMALRPVHSIYWTYFFFATIIATFAMDSSLPAATIIFANAVPRQYQGMGSSVIMTIVVYSISLGLGFAGTIELQINNGGHTKADLLHGYRGTLWFSVGLTAFGTVLALIFLLKDLRRRKLARTQVEEEKGHSSEA.

The span at 1 to 11 shows a compositional bias: polar residues; that stretch reads MSSSTLEGQET. The disordered stretch occupies residues 1-27; the sequence is MSSSTLEGQETASHHSKNSPSRHGDDG. The next 13 helical transmembrane spans lie at 86-106, 117-137, 145-165, 179-199, 207-227, 249-269, 280-300, 319-339, 351-371, 380-400, 402-422, 447-467, and 488-508; these read GKLSWTISGYGLTLGTFILIG, AIFVIGMGWLALTSMMAGVSV, ILARVLQGLGPALTVPNALAI, FAWFAASAPVGAMAGLLFGPL, WIYWSQALGVAFVFALSIVAI, IDLLGGACGVTALVLFNFAWN, YVYVCLILSFLFLAAFFYVEL, FVFGCTAAGWSTFGIWLFYVI, IQMAAWLSPILVTGIGTALIV, ASSIMLFAMLCYFITSLLMAL, PVHSIYWTYFFFATIIATFAM, SVIMTIVVYSISLGLGFAGTI, and TLWFSVGLTAFGTVLALIFLL.

Belongs to the major facilitator superfamily.

Its subcellular location is the cell membrane. In terms of biological role, efflux pump that might be required for efficient secretion of terrein or other secondary metabolies produced by the terrein genne cluster. The protein is Efflux pump terG of Aspergillus terreus (strain NIH 2624 / FGSC A1156).